The primary structure comprises 427 residues: Tyrosine--tRNA ligase (427 aa).

Tyr-33 is a binding site for L-tyrosine. Residues 38–47 (PTAPSLHVGN) carry the 'HIGH' region motif. L-tyrosine-binding residues include Tyr-168 and Gln-172. Residues 228–232 (KFGKS) carry the 'KMSKS' region motif. Lys-231 is an ATP binding site. The S4 RNA-binding domain maps to 358-426 (EHMLDLVAST…GKKHHYLIKV (69 aa)).

It belongs to the class-I aminoacyl-tRNA synthetase family. TyrS type 1 subfamily. Homodimer.

The protein localises to the cytoplasm. It catalyses the reaction tRNA(Tyr) + L-tyrosine + ATP = L-tyrosyl-tRNA(Tyr) + AMP + diphosphate + H(+). Its function is as follows. Catalyzes the attachment of tyrosine to tRNA(Tyr) in a two-step reaction: tyrosine is first activated by ATP to form Tyr-AMP and then transferred to the acceptor end of tRNA(Tyr). The protein is Tyrosine--tRNA ligase of Amoebophilus asiaticus (strain 5a2).